Reading from the N-terminus, the 480-residue chain is Membrane-bound lytic murein transglycosylase F (480 aa).

The N-terminal stretch at 1-15 (MKKLLFVLLTITLLA) is a signal peptide. The interval 16 to 259 (SCQKVSVEQT…HLNEKYFAHV (244 aa)) is non-LT domain. The interval 260-480 (KRFDYVDTRA…QENLSGAQPQ (221 aa)) is LT domain. The active site involves Glu-304.

It in the N-terminal section; belongs to the bacterial solute-binding protein 3 family. The protein in the C-terminal section; belongs to the transglycosylase Slt family.

Its subcellular location is the cell outer membrane. The enzyme catalyses Exolytic cleavage of the (1-&gt;4)-beta-glycosidic linkage between N-acetylmuramic acid (MurNAc) and N-acetylglucosamine (GlcNAc) residues in peptidoglycan, from either the reducing or the non-reducing ends of the peptidoglycan chains, with concomitant formation of a 1,6-anhydrobond in the MurNAc residue.. Its function is as follows. Murein-degrading enzyme that degrades murein glycan strands and insoluble, high-molecular weight murein sacculi, with the concomitant formation of a 1,6-anhydromuramoyl product. Lytic transglycosylases (LTs) play an integral role in the metabolism of the peptidoglycan (PG) sacculus. Their lytic action creates space within the PG sacculus to allow for its expansion as well as for the insertion of various structures such as secretion systems and flagella. The sequence is that of Membrane-bound lytic murein transglycosylase F from Shewanella sediminis (strain HAW-EB3).